The following is a 219-amino-acid chain: Redox-sensing transcriptional repressor Rex (219 aa).

Positions 17-56 (VYLRVLDNLVKRDIEVVSSKSLSKETGFTAEQIRKDLAFF) form a DNA-binding region, H-T-H motif. Residue 91–96 (GAGHLG) coordinates NAD(+).

Belongs to the transcriptional regulatory Rex family. Homodimer.

The protein localises to the cytoplasm. Its function is as follows. Modulates transcription in response to changes in cellular NADH/NAD(+) redox state. The sequence is that of Redox-sensing transcriptional repressor Rex from Natranaerobius thermophilus (strain ATCC BAA-1301 / DSM 18059 / JW/NM-WN-LF).